A 422-amino-acid chain; its full sequence is Elongation factor 1-alpha (422 aa).

Residues 5 to 221 (KPHQNLAVIG…NDLPEPQPPT (217 aa)) form the tr-type G domain. The G1 stretch occupies residues 14–21 (GHVDHGKS). 14 to 21 (GHVDHGKS) is a binding site for GTP. Serine 21 contributes to the Mg(2+) binding site. Residues 70 to 74 (GVTID) are G2. Residues 91–94 (DCPG) form a G3 region. GTP-binding positions include 91-95 (DCPGH) and 146-149 (NKMD). A G4 region spans residues 146 to 149 (NKMD). The G5 stretch occupies residues 185–187 (SAF).

This sequence belongs to the TRAFAC class translation factor GTPase superfamily. Classic translation factor GTPase family. EF-Tu/EF-1A subfamily.

The protein localises to the cytoplasm. The catalysed reaction is GTP + H2O = GDP + phosphate + H(+). In terms of biological role, GTP hydrolase that promotes the GTP-dependent binding of aminoacyl-tRNA to the A-site of ribosomes during protein biosynthesis. The polypeptide is Elongation factor 1-alpha (Natronomonas pharaonis (strain ATCC 35678 / DSM 2160 / CIP 103997 / JCM 8858 / NBRC 14720 / NCIMB 2260 / Gabara) (Halobacterium pharaonis)).